The chain runs to 178 residues: Putative peroxiredoxin in rubredoxin operon (178 aa).

The Thioredoxin domain maps to 3-163 (RLVGKPAPEF…TLRVLKAFQT (161 aa)). The Cysteine sulfenic acid (-SOH) intermediate role is filled by Cys-50.

It belongs to the peroxiredoxin family. AhpC/Prx1 subfamily. Homodimer; disulfide-linked, upon oxidation.

It is found in the cytoplasm. It carries out the reaction a hydroperoxide + [protein]-dithiol = [protein]-disulfide + an alcohol + H2O. Its function is as follows. Thiol-specific peroxidase that catalyzes the reduction of hydrogen peroxide and organic hydroperoxides to water and alcohols, respectively. Plays a role in cell protection against oxidative stress by detoxifying peroxides. The polypeptide is Putative peroxiredoxin in rubredoxin operon (Clostridium pasteurianum).